The following is a 363-amino-acid chain: Anhydro-N-acetylmuramic acid kinase (363 aa).

Gly9–Asp16 is an ATP binding site.

It belongs to the anhydro-N-acetylmuramic acid kinase family.

It catalyses the reaction 1,6-anhydro-N-acetyl-beta-muramate + ATP + H2O = N-acetyl-D-muramate 6-phosphate + ADP + H(+). The protein operates within amino-sugar metabolism; 1,6-anhydro-N-acetylmuramate degradation. Its pathway is cell wall biogenesis; peptidoglycan recycling. In terms of biological role, catalyzes the specific phosphorylation of 1,6-anhydro-N-acetylmuramic acid (anhMurNAc) with the simultaneous cleavage of the 1,6-anhydro ring, generating MurNAc-6-P. Is required for the utilization of anhMurNAc either imported from the medium or derived from its own cell wall murein, and thus plays a role in cell wall recycling. The polypeptide is Anhydro-N-acetylmuramic acid kinase (Nitrosomonas europaea (strain ATCC 19718 / CIP 103999 / KCTC 2705 / NBRC 14298)).